A 62-amino-acid chain; its full sequence is UPF0291 protein CLM_2971 (62 aa).

Belongs to the UPF0291 family.

It localises to the cytoplasm. This chain is UPF0291 protein CLM_2971, found in Clostridium botulinum (strain Kyoto / Type A2).